The sequence spans 448 residues: Adenylosuccinate synthetase (448 aa).

GTP contacts are provided by residues 22-28 (GDEGKGK) and 50-52 (GHT). The active-site Proton acceptor is D23. Mg(2+) is bound by residues D23 and G50. Residues 23-26 (DEGK), 48-51 (NAGH), T139, R153, Q234, T249, and R321 each bind IMP. H51 acts as the Proton donor in catalysis. 317–323 (SVTGRPR) contributes to the substrate binding site. GTP is bound by residues R323, 349–351 (KLD), and 431–433 (STG).

The protein belongs to the adenylosuccinate synthetase family. In terms of assembly, homodimer. Mg(2+) serves as cofactor.

It localises to the cytoplasm. The enzyme catalyses IMP + L-aspartate + GTP = N(6)-(1,2-dicarboxyethyl)-AMP + GDP + phosphate + 2 H(+). It functions in the pathway purine metabolism; AMP biosynthesis via de novo pathway; AMP from IMP: step 1/2. Its function is as follows. Plays an important role in the de novo pathway of purine nucleotide biosynthesis. Catalyzes the first committed step in the biosynthesis of AMP from IMP. The sequence is that of Adenylosuccinate synthetase from Paraburkholderia xenovorans (strain LB400).